A 147-amino-acid chain; its full sequence is Hemoglobin subunit gamma (147 aa).

The region spanning 3-147 (HFTAEEKAII…VATALAHKYH (145 aa)) is the Globin domain. The heme b site is built by His64 and His93.

The protein belongs to the globin family. Heterotetramer of two alpha chains and two gamma chains in fetal hemoglobin (Hb F). In terms of tissue distribution, red blood cells.

Gamma chains make up the fetal hemoglobin F, in combination with alpha chains. This chain is Hemoglobin subunit gamma (HBG), found in Otolemur crassicaudatus (Brown greater galago).